The primary structure comprises 118 residues: Iron-sulfur cluster insertion protein ErpA (118 aa).

The iron-sulfur cluster site is built by Cys46, Cys110, and Cys112.

The protein belongs to the HesB/IscA family. In terms of assembly, homodimer. It depends on iron-sulfur cluster as a cofactor.

Functionally, required for insertion of 4Fe-4S clusters for at least IspG. The protein is Iron-sulfur cluster insertion protein ErpA of Psychromonas ingrahamii (strain DSM 17664 / CCUG 51855 / 37).